The sequence spans 80 residues: Small ribosomal subunit protein bS18 (80 aa).

Belongs to the bacterial ribosomal protein bS18 family. As to quaternary structure, part of the 30S ribosomal subunit. Forms a tight heterodimer with protein bS6.

Binds as a heterodimer with protein bS6 to the central domain of the 16S rRNA, where it helps stabilize the platform of the 30S subunit. This is Small ribosomal subunit protein bS18 from Staphylococcus carnosus (strain TM300).